The following is a 508-amino-acid chain: GMP synthase [glutamine-hydrolyzing] (508 aa).

A Glutamine amidotransferase type-1 domain is found at 1-189 (MIVVLDFGSQ…ALLVCGCEKT (189 aa)). Residue Cys-78 is the Nucleophile of the active site. Active-site residues include His-163 and Glu-165. Residues 190-383 (WGMQNFAQKE…LGVSQDFLMR (194 aa)) enclose the GMPS ATP-PPase domain. 217 to 223 (SGGVDST) provides a ligand contact to ATP.

In terms of assembly, homodimer.

The enzyme catalyses XMP + L-glutamine + ATP + H2O = GMP + L-glutamate + AMP + diphosphate + 2 H(+). It functions in the pathway purine metabolism; GMP biosynthesis; GMP from XMP (L-Gln route): step 1/1. Catalyzes the synthesis of GMP from XMP. The sequence is that of GMP synthase [glutamine-hydrolyzing] from Helicobacter acinonychis (strain Sheeba).